A 508-amino-acid polypeptide reads, in one-letter code: N-acetyl-D-hexosamine oxidase (508 aa).

In terms of domain architecture, FAD-binding PCMH-type spans 26–203 (TDAQAAGRIA…TAYTFARLPE (178 aa)). Residues 64–123 (HCYEDFVSNNPDGAIVDLSLLNAPEVRADGTVRIPAGTQNWNGYLELYKRHNLTLPGGSC) constitute a cross-link (6-(S-cysteinyl)-8alpha-(pros-histidyl)-FAD (His-Cys)).

It belongs to the oxygen-dependent FAD-linked oxidoreductase family. The cofactor is FAD.

The enzyme catalyses N-acetyl-D-glucosamine + O2 + H2O = N-acetyl-D-glucosaminate + H2O2 + H(+). It carries out the reaction N-acetyl-D-galactosamine + O2 + H2O = N-acetyl-D-galactosaminate + H2O2 + H(+). It catalyses the reaction N-acetyl-D-glucosamine + O2 = N-acetyl-D-glucosamino-1,5-lactone + H2O2. The catalysed reaction is N-acetyl-D-galactosamine + O2 = N-acetyl-D-galactosamino-1,5-lactone + H2O2. Its function is as follows. Catalyzes the oxidation of a range of monosaccharides in vitro, displaying the highest activity with N-acetylglucosamine (GlcNAc) and N-acetylgalactosamine (GalNAc), with a reduction of O2 to H2O2. Acts upon the C1 carbon of the GlcNAc or GalNAc molecule, producing the corresponding lactone, which can spontaneously hydrolyze. Its biological function is unclear, but its main function might be connected to extracellular production of hydrogen peroxide to compete with other organisms through oxidative stress, or support the action of peroxidases and peroxygenases. The polypeptide is N-acetyl-D-hexosamine oxidase (Ralstonia solanacearum (strain UW551)).